The primary structure comprises 129 residues: uncharacterized protein (129 aa).

Disordered regions lie at residues 1-57 and 87-129; these read MGGG…LPNH and PVSS…WLWW. Residues 10–20 are compositionally biased toward basic and acidic residues; the sequence is SGEERREKRSG. The segment covering 87–99 has biased composition (low complexity); that stretch reads PVSSSPSRSPSSS.

This is an uncharacterized protein from Homo sapiens (Human).